The primary structure comprises 77 residues: MLSKEKINRINELSAKAKNGQLTDEEAKERTALRKEYLDTFRATMRDTIENVKVVDAEGNDVTPEKVRQAKKNKFLN.

It belongs to the UPF0291 family.

The protein resides in the cytoplasm. The chain is UPF0291 protein Bsph_1689 from Lysinibacillus sphaericus (strain C3-41).